The following is a 385-amino-acid chain: MAFRKSNVYLSLVNSYIIDSPQPSSINYWWNMGSLLGLCLVIQIVTGIFMAMHYSSNIELAFSSVEHIMRDVHNGYILRYLHANGASFFFMVMFMHMAKGLYYGSYRSPRVTLWNVGVIIFILTIATAFLGYCCVYGQMSHWGATVITNLFSAIPFVGNDIVSWLWGGFSVSNPTIQRFFALHYLVPFIIAAMVIMHLMALHIHGSSNPLGITGNLDRIPMHSYFIFKDLVTVFLFMLILALFVFYSPNTLGHPDNYIPGNPLVTPASIVPEWYLLPFYAILRSIPDKLLGVITMFAAILVLLVLPFTDRSVVRGNTFKVLSKFFFFIFVFNFVLLGQIGACHVEVPYVLMGQIATFIYFAYFLIIVPVISTIENVLFYIGRVNK.

Topologically, residues 1–27 (MAFRKSNVYLSLVNSYIIDSPQPSSIN) are mitochondrial matrix. Y16 serves as a coordination point for a ubiquinone. A helical transmembrane segment spans residues 28–51 (YWWNMGSLLGLCLVIQIVTGIFMA). Residues 52–74 (MHYSSNIELAFSSVEHIMRDVHN) are Mitochondrial intermembrane-facing. A helical membrane pass occupies residues 75–102 (GYILRYLHANGASFFFMVMFMHMAKGLY). Residues H82 and H96 each contribute to the heme b site. Over 103–110 (YGSYRSPR) the chain is Mitochondrial matrix. Residues 111-135 (VTLWNVGVIIFILTIATAFLGYCCV) form a helical membrane-spanning segment. Topologically, residues 136–172 (YGQMSHWGATVITNLFSAIPFVGNDIVSWLWGGFSVS) are mitochondrial intermembrane. A helical membrane pass occupies residues 173-204 (NPTIQRFFALHYLVPFIIAAMVIMHLMALHIH). The heme b site is built by H183 and H197. H202 provides a ligand contact to a ubiquinone. The Mitochondrial matrix segment spans residues 205-223 (GSSNPLGITGNLDRIPMHS). The chain crosses the membrane as a helical span at residues 224 to 246 (YFIFKDLVTVFLFMLILALFVFY). Over 247-287 (SPNTLGHPDNYIPGNPLVTPASIVPEWYLLPFYAILRSIPD) the chain is Mitochondrial intermembrane. A helical transmembrane segment spans residues 288–308 (KLLGVITMFAAILVLLVLPFT). Topologically, residues 309 to 319 (DRSVVRGNTFK) are mitochondrial matrix. A helical transmembrane segment spans residues 320-340 (VLSKFFFFIFVFNFVLLGQIG). Over 341–347 (ACHVEVP) the chain is Mitochondrial intermembrane. A helical membrane pass occupies residues 348–364 (YVLMGQIATFIYFAYFL). Over 365 to 385 (IIVPVISTIENVLFYIGRVNK) the chain is Mitochondrial matrix.

The protein belongs to the cytochrome b family. In terms of assembly, component of the ubiquinol-cytochrome c oxidoreductase (cytochrome b-c1 complex, complex III, CIII), a multisubunit enzyme composed of 10 subunits. The complex is composed of 3 respiratory subunits cytochrome b (COB), cytochrome c1 (CYT1) and Rieske protein (RIP1), 2 core protein subunits COR1 and QCR2, and 5 low-molecular weight protein subunits QCR6, QCR7, QCR8, QCR9 and QCR10. The complex exists as an obligatory dimer and forms supercomplexes (SCs) in the inner mitochondrial membrane with a monomer or a dimer of cytochrome c oxidase (complex IV, CIV), resulting in 2 different assemblies (supercomplexes III(2)IV and III(2)IV(2)). It depends on heme b as a cofactor.

The protein localises to the mitochondrion inner membrane. The enzyme catalyses a quinol + 2 Fe(III)-[cytochrome c](out) = a quinone + 2 Fe(II)-[cytochrome c](out) + 2 H(+)(out). In terms of biological role, component of the ubiquinol-cytochrome c oxidoreductase, a multisubunit transmembrane complex that is part of the mitochondrial electron transport chain which drives oxidative phosphorylation. The respiratory chain contains 3 multisubunit complexes succinate dehydrogenase (complex II, CII), ubiquinol-cytochrome c oxidoreductase (cytochrome b-c1 complex, complex III, CIII) and cytochrome c oxidase (complex IV, CIV), that cooperate to transfer electrons derived from NADH and succinate to molecular oxygen, creating an electrochemical gradient over the inner membrane that drives transmembrane transport and the ATP synthase. The cytochrome b-c1 complex catalyzes electron transfer from ubiquinol to cytochrome c, linking this redox reaction to translocation of protons across the mitochondrial inner membrane, with protons being carried across the membrane as hydrogens on the quinol. In the process called Q cycle, 2 protons are consumed from the matrix, 4 protons are released into the intermembrane space and 2 electrons are passed to cytochrome c. Cytochrome b is a catalytic core subunit containing 2 b-type hemes BL and BH topographically segregated in the quinone reduction (Qi) and quinol oxidation (Q0) sites on opposite sides of the membrane. The polypeptide is Cytochrome b (COB) (Saccharomyces cerevisiae (strain ATCC 204508 / S288c) (Baker's yeast)).